The chain runs to 192 residues: Elongation factor P (192 aa).

It belongs to the elongation factor P family.

The protein localises to the cytoplasm. Its pathway is protein biosynthesis; polypeptide chain elongation. Functionally, involved in peptide bond synthesis. Stimulates efficient translation and peptide-bond synthesis on native or reconstituted 70S ribosomes in vitro. Probably functions indirectly by altering the affinity of the ribosome for aminoacyl-tRNA, thus increasing their reactivity as acceptors for peptidyl transferase. The protein is Elongation factor P of Borrelia recurrentis (strain A1).